The following is a 135-amino-acid chain: Interleukin-4 (135 aa).

An N-terminal signal peptide occupies residues 1-24 (MGLTYQLIPVLVCLLVCTSHFVHG). Intrachain disulfides connect Cys-27–Cys-135, Cys-48–Cys-85, and Cys-70–Cys-105. N-linked (GlcNAc...) asparagine glycosylation occurs at Asn-62.

Belongs to the IL-4/IL-13 family.

The protein localises to the secreted. Its function is as follows. Participates in at least several B-cell activation processes as well as of other cell types. It is a costimulator of DNA-synthesis. It induces the expression of class II MHC molecules on resting B-cells. It enhances both secretion and cell surface expression of IgE and IgG1. It also regulates the expression of the low affinity Fc receptor for IgE (CD23) on both lymphocytes and monocytes. Positively regulates IL31RA expression in macrophages. Stimulates autophagy in dendritic cells by interfering with mTORC1 signaling and through the induction of RUFY4. This Bubalus carabanensis (Swamp type water buffalo) protein is Interleukin-4 (IL4).